Consider the following 327-residue polypeptide: GMP reductase (327 aa).

The active-site Thioimidate intermediate is the Cys-176. Ile-205–Val-228 serves as a coordination point for NADP(+).

It belongs to the IMPDH/GMPR family. GuaC type 2 subfamily.

It catalyses the reaction IMP + NH4(+) + NADP(+) = GMP + NADPH + 2 H(+). Catalyzes the irreversible NADPH-dependent deamination of GMP to IMP. It functions in the conversion of nucleobase, nucleoside and nucleotide derivatives of G to A nucleotides, and in maintaining the intracellular balance of A and G nucleotides. The sequence is that of GMP reductase from Streptococcus pyogenes serotype M28 (strain MGAS6180).